The following is a 114-amino-acid chain: Putative pterin-4-alpha-carbinolamine dehydratase (114 aa).

Belongs to the pterin-4-alpha-carbinolamine dehydratase family.

The enzyme catalyses (4aS,6R)-4a-hydroxy-L-erythro-5,6,7,8-tetrahydrobiopterin = (6R)-L-erythro-6,7-dihydrobiopterin + H2O. This Pseudoalteromonas translucida (strain TAC 125) protein is Putative pterin-4-alpha-carbinolamine dehydratase.